Consider the following 549-residue polypeptide: Glucose-6-phosphate isomerase (549 aa).

The active-site Proton donor is E355. Catalysis depends on residues H386 and K514.

It belongs to the GPI family.

The protein resides in the cytoplasm. It carries out the reaction alpha-D-glucose 6-phosphate = beta-D-fructose 6-phosphate. Its pathway is carbohydrate biosynthesis; gluconeogenesis. It functions in the pathway carbohydrate degradation; glycolysis; D-glyceraldehyde 3-phosphate and glycerone phosphate from D-glucose: step 2/4. Catalyzes the reversible isomerization of glucose-6-phosphate to fructose-6-phosphate. The sequence is that of Glucose-6-phosphate isomerase from Salmonella schwarzengrund (strain CVM19633).